We begin with the raw amino-acid sequence, 285 residues long: uncharacterized protein (285 aa).

The 108-residue stretch at 92-199 (TLLLADVEES…PTINRTARLR (108 aa)) folds into the Guanylate cyclase domain.

Belongs to the adenylyl cyclase class-4/guanylyl cyclase family.

This is an uncharacterized protein from Mycobacterium tuberculosis (strain ATCC 25618 / H37Rv).